The primary structure comprises 312 residues: uncharacterized protein (312 aa).

Transmembrane regions (helical) follow at residues 13–33 (AAGTIFLLIGTVCFASKSIWI), 45–65 (AVLLYRQLLAVPLFWLIFLIY), 81–101 (ACGAGVFCFFLSPLLDFIGLN), 105–125 (AMVERILLMSYPLFVFGFTAC), 133–153 (IQDLFAVLAVMFGLFLALGGW), 162–182 (MIGAVFILLSSAVYAGYLVLS), 198–218 (GMTAAGAAMMLYTGIKSAAGM), 229–249 (MYGLFAVIAVVTTVIPFVLML), 260–280 (AAAISMAGPILTIFYGALFLG), and 283–303 (LGLIQVIGCGGVFFVITGMEY). The 131-residue stretch at 173–303 (AVYAGYLVLS…VFFVITGMEY (131 aa)) folds into the EamA domain.

The protein belongs to the EamA transporter family.

The protein localises to the cell membrane. This is an uncharacterized protein from Bacillus subtilis (strain 168).